Consider the following 195-residue polypeptide: A-type ATP synthase subunit E (195 aa).

This sequence belongs to the V-ATPase E subunit family. Has multiple subunits with at least A(3), B(3), C, D, E, F, H, I and proteolipid K(x).

Its subcellular location is the cell membrane. In terms of biological role, component of the A-type ATP synthase that produces ATP from ADP in the presence of a proton gradient across the membrane. The polypeptide is A-type ATP synthase subunit E (Halobacterium salinarum (strain ATCC 29341 / DSM 671 / R1)).